Consider the following 929-residue polypeptide: Protocadherin gamma-B7 (929 aa).

Residues 1–30 (MGGSCAQRRRAGPRQVLFPLLLPLFYPTLC) form the signal peptide. Cadherin domains follow at residues 31 to 133 (EPIR…APQF), 134 to 242 (QKDE…PPVF), 243 to 347 (SQDV…SPEI), 348 to 452 (IITS…APVF), 453 to 562 (GQSA…APRV), and 570 to 675 (DGSA…LPDF). The Extracellular portion of the chain corresponds to 31 to 691 (EPIRYSIPEE…SDSQAEMQFY (661 aa)). N-linked (GlcNAc...) asparagine glycosylation is found at Asn-419 and Asn-545. The helical transmembrane segment at 692–712 (LVVALALISVLFLLAVILAIA) threads the bilayer. Residues 713–929 (LRLRQSFSPT…KKKSGKKEKK (217 aa)) lie on the Cytoplasmic side of the membrane. Disordered regions lie at residues 806–838 (QAPP…WPNN) and 899–929 (ATLT…KEKK). The span at 807-838 (APPNTDWRFSQAQRPGTSGSQNGDDTGTWPNN) shows a compositional bias: polar residues. Residues 919-929 (NKKKSGKKEKK) are compositionally biased toward basic residues.

The protein resides in the cell membrane. Its function is as follows. Potential calcium-dependent cell-adhesion protein. May be involved in the establishment and maintenance of specific neuronal connections in the brain. This Pan troglodytes (Chimpanzee) protein is Protocadherin gamma-B7 (PCDHGB7).